The chain runs to 240 residues: UDP-2,3-diacylglucosamine hydrolase (240 aa).

Residues Asp8, His10, Asp41, Asn79, and His114 each contribute to the Mn(2+) site. Residue Asn79 to Arg80 participates in substrate binding. Positions 122, 160, 164, 167, and 195 each coordinate substrate. Mn(2+)-binding residues include His195 and His197.

Belongs to the LpxH family. Mn(2+) is required as a cofactor.

Its subcellular location is the cell inner membrane. The catalysed reaction is UDP-2-N,3-O-bis[(3R)-3-hydroxytetradecanoyl]-alpha-D-glucosamine + H2O = 2-N,3-O-bis[(3R)-3-hydroxytetradecanoyl]-alpha-D-glucosaminyl 1-phosphate + UMP + 2 H(+). It functions in the pathway glycolipid biosynthesis; lipid IV(A) biosynthesis; lipid IV(A) from (3R)-3-hydroxytetradecanoyl-[acyl-carrier-protein] and UDP-N-acetyl-alpha-D-glucosamine: step 4/6. Its function is as follows. Hydrolyzes the pyrophosphate bond of UDP-2,3-diacylglucosamine to yield 2,3-diacylglucosamine 1-phosphate (lipid X) and UMP by catalyzing the attack of water at the alpha-P atom. Involved in the biosynthesis of lipid A, a phosphorylated glycolipid that anchors the lipopolysaccharide to the outer membrane of the cell. The protein is UDP-2,3-diacylglucosamine hydrolase of Escherichia coli O6:K15:H31 (strain 536 / UPEC).